A 333-amino-acid chain; its full sequence is Probable tRNA pseudouridine synthase B (333 aa).

Positions 1–14 (MKCPSREVFSKFEE) are enriched in basic and acidic residues. The segment at 1 to 27 (MKCPSREVFSKFEESTNPQWGKPPSQR) is disordered. Asp-71 serves as the catalytic Nucleophile. The 76-residue stretch at 238-313 (LPKIWVRDSA…LVARTDRVVM (76 aa)) folds into the PUA domain.

This sequence belongs to the pseudouridine synthase TruB family. Type 2 subfamily.

The enzyme catalyses uridine(55) in tRNA = pseudouridine(55) in tRNA. Could be responsible for synthesis of pseudouridine from uracil-55 in the psi GC loop of transfer RNAs. This is Probable tRNA pseudouridine synthase B from Pyrobaculum aerophilum (strain ATCC 51768 / DSM 7523 / JCM 9630 / CIP 104966 / NBRC 100827 / IM2).